The sequence spans 366 residues: Alanine racemase (366 aa).

Lys40 serves as the catalytic Proton acceptor; specific for D-alanine. Lys40 carries the post-translational modification N6-(pyridoxal phosphate)lysine. Arg136 contributes to the substrate binding site. The active-site Proton acceptor; specific for L-alanine is the Tyr263. Met310 contacts substrate.

This sequence belongs to the alanine racemase family. The cofactor is pyridoxal 5'-phosphate.

It carries out the reaction L-alanine = D-alanine. The protein operates within amino-acid biosynthesis; D-alanine biosynthesis; D-alanine from L-alanine: step 1/1. Catalyzes the interconversion of L-alanine and D-alanine. May also act on other amino acids. In Streptococcus pyogenes serotype M2 (strain MGAS10270), this protein is Alanine racemase (alr).